The following is a 428-amino-acid chain: Histidine--tRNA ligase (428 aa).

The protein belongs to the class-II aminoacyl-tRNA synthetase family.

The protein localises to the cytoplasm. It carries out the reaction tRNA(His) + L-histidine + ATP = L-histidyl-tRNA(His) + AMP + diphosphate + H(+). The polypeptide is Histidine--tRNA ligase (Sulfolobus acidocaldarius (strain ATCC 33909 / DSM 639 / JCM 8929 / NBRC 15157 / NCIMB 11770)).